The chain runs to 536 residues: Lysosomal acid glucosylceramidase (536 aa).

The N-terminal stretch at 1–39 (MELSSPSREEYPMPRGRVGIMAASLMGLLLLHTVSWVSG) is a signal peptide. 2 disulfides stabilise this stretch: Cys-43–Cys-55 and Cys-57–Cys-62. 4 N-linked (GlcNAc...) asparagine glycosylation sites follow: Asn-58, Asn-98, Asn-185, and Asn-208. The active-site Proton donor is the Glu-274. The N-linked (GlcNAc...) asparagine glycan is linked to Asn-309. Glu-379 (nucleophile) is an active-site residue. Asn-501 is a glycosylation site (N-linked (GlcNAc...) asparagine).

Belongs to the glycosyl hydrolase 30 family. In terms of assembly, interacts with saposin-C. Interacts with SCARB2. Interacts with TCP1. Interacts with GRN; this interaction prevents aggregation of GBA1-SCARB2 complex via interaction with HSPA1A upon stress.

The protein localises to the lysosome membrane. It catalyses the reaction a beta-D-glucosyl-(1&lt;-&gt;1')-N-acylsphing-4-enine + H2O = an N-acylsphing-4-enine + D-glucose. It carries out the reaction a beta-D-galactosyl-(1&lt;-&gt;1')-N-acylsphing-4-enine + H2O = an N-acylsphing-4-enine + D-galactose. The enzyme catalyses cholesteryl 3-beta-D-glucoside + H2O = cholesterol + D-glucose. The catalysed reaction is a beta-D-glucosyl-(1&lt;-&gt;1')-N-acylsphing-4-enine + cholesterol = cholesteryl 3-beta-D-glucoside + an N-acylsphing-4-enine. It catalyses the reaction beta-D-glucosyl-N-(9Z-octadecenoyl)-sphing-4E-enine + cholesterol = N-(9Z-octadecenoyl)-sphing-4-enine + cholesteryl 3-beta-D-glucoside. It carries out the reaction beta-D-glucosyl-N-octanoylsphing-4E-enine + cholesterol = N-octanoylsphing-4-enine + cholesteryl 3-beta-D-glucoside. The enzyme catalyses beta-D-glucosyl-N-dodecanoylsphing-4-enine + cholesterol = N-dodecanoylsphing-4-enine + cholesteryl 3-beta-D-glucoside. The catalysed reaction is beta-D-glucosyl-(1&lt;-&gt;1)-N-octadecanoylsphing-4-enine + cholesterol = N-octadecanoylsphing-4-enine + cholesteryl 3-beta-D-glucoside. It catalyses the reaction beta-D-glucosyl-(1&lt;-&gt;1')-N-(15Z-tetracosenoyl)-sphing-4-enine + cholesterol = N-(15Z-tetracosenoyl)-sphing-4-enine + cholesteryl 3-beta-D-glucoside. It carries out the reaction a beta-D-galactosyl-(1&lt;-&gt;1')-N-acylsphing-4-enine + cholesterol = cholesteryl 3-beta-D-galactoside + an N-acylsphing-4-enine. The enzyme catalyses 1-(beta-D-galactosyl)-N-dodecanoylsphing-4-enine + cholesterol = cholesteryl 3-beta-D-galactoside + N-dodecanoylsphing-4-enine. The catalysed reaction is a beta-D-xylosyl-(1&lt;-&gt;1')-N-acylsphing-4-enine + cholesterol = cholesteryl 3-beta-D-xyloside + an N-acylsphing-4-enine. It catalyses the reaction beta-D-xylosyl-(1&lt;-&gt;1')-N-(9Z-octadecenoyl)-sphing-4-enine + cholesterol = cholesteryl 3-beta-D-xyloside + N-(9Z-octadecenoyl)-sphing-4-enine. It functions in the pathway steroid metabolism; cholesterol metabolism. Its pathway is sphingolipid metabolism. Its function is as follows. Glucosylceramidase that catalyzes, within the lysosomal compartment, the hydrolysis of glucosylceramides/GlcCers (such as beta-D-glucosyl-(1&lt;-&gt;1')-N-acylsphing-4-enine) into free ceramides (such as N-acylsphing-4-enine) and glucose. Plays a central role in the degradation of complex lipids and the turnover of cellular membranes. Through the production of ceramides, participates in the PKC-activated salvage pathway of ceramide formation. Catalyzes the glucosylation of cholesterol, through a transglucosylation reaction where glucose is transferred from GlcCer to cholesterol. GlcCer containing mono-unsaturated fatty acids (such as beta-D-glucosyl-N-(9Z-octadecenoyl)-sphing-4-enine) are preferred as glucose donors for cholesterol glucosylation when compared with GlcCer containing same chain length of saturated fatty acids (such as beta-D-glucosyl-N-octadecanoyl-sphing-4-enine). Under specific conditions, may alternatively catalyze the reverse reaction, transferring glucose from cholesteryl 3-beta-D-glucoside to ceramide. Can also hydrolyze cholesteryl 3-beta-D-glucoside producing glucose and cholesterol. Catalyzes the hydrolysis of galactosylceramides/GalCers (such as beta-D-galactosyl-(1&lt;-&gt;1')-N-acylsphing-4-enine), as well as the transfer of galactose between GalCers and cholesterol in vitro, but with lower activity than with GlcCers. Contrary to GlcCer and GalCer, xylosylceramide/XylCer (such as beta-D-xyosyl-(1&lt;-&gt;1')-N-acylsphing-4-enine) is not a good substrate for hydrolysis, however it is a good xylose donor for transxylosylation activity to form cholesteryl 3-beta-D-xyloside. The chain is Lysosomal acid glucosylceramidase (GBA1) from Bos taurus (Bovine).